The following is a 261-amino-acid chain: Cytochrome c oxidase subunit 3 (261 aa).

The Mitochondrial matrix segment spans residues 1–15 (MTRQTHAYHMVNPSP). The chain crosses the membrane as a helical span at residues 16–34 (WPLTGALSALLMTSGLIMW). The Mitochondrial intermembrane portion of the chain corresponds to 35–40 (FHFNST). Residues 41–66 (ILLMLGLTTNMLTMYQWWRDVIREST) form a helical membrane-spanning segment. At 67–72 (FQGHHT) the chain is on the mitochondrial matrix side. Residues 73-105 (PNVQKGLRYGMILFIISEVLFFTGFFWAFYHSS) form a helical membrane-spanning segment. The Mitochondrial intermembrane segment spans residues 106–128 (LAPTPELGGCWPPTGIHPLNPLE). The chain crosses the membrane as a helical span at residues 129 to 152 (VPLLNTSVLLASGVSITWAHHSLM). The Mitochondrial matrix segment spans residues 153-155 (EGN). A helical transmembrane segment spans residues 156–183 (RNHMLQALFITIALGVYFTLLQASEYYE). The Mitochondrial intermembrane segment spans residues 184–190 (APFTISD). Residues 191-223 (GVYGSTFFVATGFHGLHVIIGSTFLIVCFFRQL) form a helical membrane-spanning segment. Over 224-232 (KFHFTSNHH) the chain is Mitochondrial matrix. Residues 233-256 (FGFEAAAWYWHFVDVVWLFLYVSI) form a helical membrane-spanning segment. At 257–261 (YWWGS) the chain is on the mitochondrial intermembrane side.

Belongs to the cytochrome c oxidase subunit 3 family. In terms of assembly, component of the cytochrome c oxidase (complex IV, CIV), a multisubunit enzyme composed of 14 subunits. The complex is composed of a catalytic core of 3 subunits MT-CO1, MT-CO2 and MT-CO3, encoded in the mitochondrial DNA, and 11 supernumerary subunits COX4I, COX5A, COX5B, COX6A, COX6B, COX6C, COX7A, COX7B, COX7C, COX8 and NDUFA4, which are encoded in the nuclear genome. The complex exists as a monomer or a dimer and forms supercomplexes (SCs) in the inner mitochondrial membrane with NADH-ubiquinone oxidoreductase (complex I, CI) and ubiquinol-cytochrome c oxidoreductase (cytochrome b-c1 complex, complex III, CIII), resulting in different assemblies (supercomplex SCI(1)III(2)IV(1) and megacomplex MCI(2)III(2)IV(2)).

Its subcellular location is the mitochondrion inner membrane. The enzyme catalyses 4 Fe(II)-[cytochrome c] + O2 + 8 H(+)(in) = 4 Fe(III)-[cytochrome c] + 2 H2O + 4 H(+)(out). Its function is as follows. Component of the cytochrome c oxidase, the last enzyme in the mitochondrial electron transport chain which drives oxidative phosphorylation. The respiratory chain contains 3 multisubunit complexes succinate dehydrogenase (complex II, CII), ubiquinol-cytochrome c oxidoreductase (cytochrome b-c1 complex, complex III, CIII) and cytochrome c oxidase (complex IV, CIV), that cooperate to transfer electrons derived from NADH and succinate to molecular oxygen, creating an electrochemical gradient over the inner membrane that drives transmembrane transport and the ATP synthase. Cytochrome c oxidase is the component of the respiratory chain that catalyzes the reduction of oxygen to water. Electrons originating from reduced cytochrome c in the intermembrane space (IMS) are transferred via the dinuclear copper A center (CU(A)) of subunit 2 and heme A of subunit 1 to the active site in subunit 1, a binuclear center (BNC) formed by heme A3 and copper B (CU(B)). The BNC reduces molecular oxygen to 2 water molecules using 4 electrons from cytochrome c in the IMS and 4 protons from the mitochondrial matrix. The sequence is that of Cytochrome c oxidase subunit 3 (MT-CO3) from Eudorcas rufifrons (Red-fronted gazelle).